Reading from the N-terminus, the 426-residue chain is MLIKGGHVVDPKTNTNGIMDILVEDGIITEIGKDIEISNGDIIYAEGKLVLPGLVDAHCHLRDPGFEYKEDIETGTMSAAMGGFTSIACMPNTDPVCDNKAVVKYIINKAKQDGYVNVYPIGAISKGQKGEELSEIGELKFAGAVAISDDGKPVKSSSLMKRALEYSSMFDIAVISHCEDLDLADGGVMNEGYWSTVMGLKGIPSAAEEIMVARDIILSEYTKVPIHIAHVSTELSVELIRNAKKRGVKVTCETCPHYFVLTDEACKDFNTLAKVNPPLRTRRDVEAVIEGLKDGTIDIIATDHAPHHADEKNVEFNLAANGMVGFETALPLAITYLVKPGHLTISQLVEKMCVNPSKLLGINKGTLETGRSADITIVDLNEEFVVDVNKFKSKSKNSPFHGFKLNGSVYYTLVNGNVVVREKVLL.

Zn(2+)-binding residues include His58 and His60. Residues 60–62 (HLR) and Asn92 contribute to the substrate site. Residues Asp150, His177, and His230 each contribute to the Zn(2+) site. Substrate is bound at residue Asn276. Asp303 contributes to the Zn(2+) binding site. Asp303 is an active-site residue. His307 contacts substrate.

Belongs to the metallo-dependent hydrolases superfamily. DHOase family. Class I DHOase subfamily. Zn(2+) is required as a cofactor.

The catalysed reaction is (S)-dihydroorotate + H2O = N-carbamoyl-L-aspartate + H(+). It functions in the pathway pyrimidine metabolism; UMP biosynthesis via de novo pathway; (S)-dihydroorotate from bicarbonate: step 3/3. In terms of biological role, catalyzes the reversible cyclization of carbamoyl aspartate to dihydroorotate. This is Dihydroorotase from Acetivibrio thermocellus (strain ATCC 27405 / DSM 1237 / JCM 9322 / NBRC 103400 / NCIMB 10682 / NRRL B-4536 / VPI 7372) (Clostridium thermocellum).